The sequence spans 40 residues: Photosystem II reaction center protein J (40 aa).

Met-2 is modified (N-acetylmethionine). Residues 2–11 (MSEGGRIPLW) lie on the Cytoplasmic side of the membrane. The chain crosses the membrane as a helical span at residues 12-26 (IVATVAGMGVIVIVG). Over 27–40 (LFFYGAYAGLGSSL) the chain is Lumenal.

This sequence belongs to the PsbJ family. As to quaternary structure, PSII is composed of 1 copy each of membrane proteins PsbA, PsbB, PsbC, PsbD, PsbE, PsbF, PsbH, PsbI, PsbJ, PsbK, PsbL, PsbM, PsbT, PsbX, PsbY, PsbZ, Psb30/Ycf12, peripheral proteins PsbO, CyanoQ (PsbQ), PsbU, PsbV and a large number of cofactors. It forms dimeric complexes. It depends on PSII binds multiple chlorophylls, carotenoids and specific lipids. as a cofactor.

The protein localises to the cellular thylakoid membrane. One of the components of the core complex of photosystem II (PSII). PSII is a light-driven water:plastoquinone oxidoreductase that uses light energy to abstract electrons from H(2)O, generating O(2) and a proton gradient subsequently used for ATP formation. It consists of a core antenna complex that captures photons, and an electron transfer chain that converts photonic excitation into a charge separation. Functionally, may play a regulatory role in PSII biogenesis. The sequence is that of Photosystem II reaction center protein J from Thermosynechococcus vestitus (strain NIES-2133 / IAM M-273 / BP-1).